A 361-amino-acid chain; its full sequence is UDP-N-acetylglucosamine--N-acetylmuramyl-(pentapeptide) pyrophosphoryl-undecaprenol N-acetylglucosamine transferase (361 aa).

UDP-N-acetyl-alpha-D-glucosamine is bound by residues 21–23, Asn-131, Arg-172, Ser-195, Ile-250, and Gln-295; that span reads TGG.

Belongs to the glycosyltransferase 28 family. MurG subfamily.

The protein resides in the cell inner membrane. The enzyme catalyses di-trans,octa-cis-undecaprenyl diphospho-N-acetyl-alpha-D-muramoyl-L-alanyl-D-glutamyl-meso-2,6-diaminopimeloyl-D-alanyl-D-alanine + UDP-N-acetyl-alpha-D-glucosamine = di-trans,octa-cis-undecaprenyl diphospho-[N-acetyl-alpha-D-glucosaminyl-(1-&gt;4)]-N-acetyl-alpha-D-muramoyl-L-alanyl-D-glutamyl-meso-2,6-diaminopimeloyl-D-alanyl-D-alanine + UDP + H(+). Its pathway is cell wall biogenesis; peptidoglycan biosynthesis. Its function is as follows. Cell wall formation. Catalyzes the transfer of a GlcNAc subunit on undecaprenyl-pyrophosphoryl-MurNAc-pentapeptide (lipid intermediate I) to form undecaprenyl-pyrophosphoryl-MurNAc-(pentapeptide)GlcNAc (lipid intermediate II). This Solibacter usitatus (strain Ellin6076) protein is UDP-N-acetylglucosamine--N-acetylmuramyl-(pentapeptide) pyrophosphoryl-undecaprenol N-acetylglucosamine transferase.